The chain runs to 270 residues: 4-hydroxy-tetrahydrodipicolinate reductase (270 aa).

Residues G8–M13 and E34 each bind NAD(+). R35 is a binding site for NADP(+). NAD(+) contacts are provided by residues G98–T100 and S122–M125. H155 serves as the catalytic Proton donor/acceptor. H156 is a (S)-2,3,4,5-tetrahydrodipicolinate binding site. The active-site Proton donor is the K159. G165 to T166 contributes to the (S)-2,3,4,5-tetrahydrodipicolinate binding site.

It belongs to the DapB family.

The protein resides in the cytoplasm. The catalysed reaction is (S)-2,3,4,5-tetrahydrodipicolinate + NAD(+) + H2O = (2S,4S)-4-hydroxy-2,3,4,5-tetrahydrodipicolinate + NADH + H(+). It carries out the reaction (S)-2,3,4,5-tetrahydrodipicolinate + NADP(+) + H2O = (2S,4S)-4-hydroxy-2,3,4,5-tetrahydrodipicolinate + NADPH + H(+). Its pathway is amino-acid biosynthesis; L-lysine biosynthesis via DAP pathway; (S)-tetrahydrodipicolinate from L-aspartate: step 4/4. In terms of biological role, catalyzes the conversion of 4-hydroxy-tetrahydrodipicolinate (HTPA) to tetrahydrodipicolinate. This Anaeromyxobacter dehalogenans (strain 2CP-1 / ATCC BAA-258) protein is 4-hydroxy-tetrahydrodipicolinate reductase.